Here is an 81-residue protein sequence, read N- to C-terminus: Defensin-like protein 313 (81 aa).

Residues 1–32 form the signal peptide; that stretch reads MESKRSSSSPLLILITTIMIIFIISGPKSVDA. 3 disulfide bridges follow: Cys-34–Cys-63, Cys-45–Cys-74, and Cys-49–Cys-76.

This sequence belongs to the DEFL family.

It is found in the secreted. The chain is Defensin-like protein 313 from Arabidopsis thaliana (Mouse-ear cress).